The following is a 329-amino-acid chain: Ketol-acid reductoisomerase (NADP(+)) (329 aa).

Residues 2–182 (TQLFYDTDAD…GGTRAGILET (181 aa)) form the KARI N-terminal Rossmann domain. Residues 25 to 28 (YGSQ), Ser51, Ser53, and 83 to 86 (DEFQ) contribute to the NADP(+) site. His108 is an active-site residue. Position 134 (Gly134) interacts with NADP(+). A KARI C-terminal knotted domain is found at 183–328 (NFKEETETDL…KGLRSMFSWL (146 aa)). 4 residues coordinate Mg(2+): Asp191, Glu195, Glu227, and Glu231. Ser252 serves as a coordination point for substrate.

It belongs to the ketol-acid reductoisomerase family. It depends on Mg(2+) as a cofactor.

It catalyses the reaction (2R)-2,3-dihydroxy-3-methylbutanoate + NADP(+) = (2S)-2-acetolactate + NADPH + H(+). It carries out the reaction (2R,3R)-2,3-dihydroxy-3-methylpentanoate + NADP(+) = (S)-2-ethyl-2-hydroxy-3-oxobutanoate + NADPH + H(+). It participates in amino-acid biosynthesis; L-isoleucine biosynthesis; L-isoleucine from 2-oxobutanoate: step 2/4. The protein operates within amino-acid biosynthesis; L-valine biosynthesis; L-valine from pyruvate: step 2/4. Its function is as follows. Involved in the biosynthesis of branched-chain amino acids (BCAA). Catalyzes an alkyl-migration followed by a ketol-acid reduction of (S)-2-acetolactate (S2AL) to yield (R)-2,3-dihydroxy-isovalerate. In the isomerase reaction, S2AL is rearranged via a Mg-dependent methyl migration to produce 3-hydroxy-3-methyl-2-ketobutyrate (HMKB). In the reductase reaction, this 2-ketoacid undergoes a metal-dependent reduction by NADPH to yield (R)-2,3-dihydroxy-isovalerate. The polypeptide is Ketol-acid reductoisomerase (NADP(+)) (Prochlorococcus marinus (strain AS9601)).